The following is a 495-amino-acid chain: Probable cytochrome P450 4s3 (495 aa).

The heme site is built by Glu-307 and Cys-436.

This sequence belongs to the cytochrome P450 family. Heme serves as cofactor.

It is found in the endoplasmic reticulum membrane. The protein localises to the microsome membrane. May be involved in the metabolism of insect hormones and in the breakdown of synthetic insecticides. This chain is Probable cytochrome P450 4s3 (Cyp4s3), found in Drosophila melanogaster (Fruit fly).